The chain runs to 118 residues: Vesicle-associated membrane protein 1 (118 aa).

The span at 1–15 (MSAPAQPPAEGTEGA) shows a compositional bias: low complexity. The interval 1 to 38 (MSAPAQPPAEGTEGAAPGGGPPGPPPNTTSNRRLQQTQ) is disordered. At 1–96 (MSAPAQPPAE…KRKYWWKNCK (96 aa)) the chain is on the cytoplasmic side. The span at 28–38 (TTSNRRLQQTQ) shows a compositional bias: polar residues. The region spanning 33-93 (RLQQTQAQVE…AKLKRKYWWK (61 aa)) is the v-SNARE coiled-coil homology domain. Serine 63 carries the post-translational modification Phosphoserine. A helical; Anchor for type IV membrane protein transmembrane segment spans residues 97–116 (MMIMLGAICAIIVVVIVIYI). The Vesicular portion of the chain corresponds to 117-118 (FT).

It belongs to the synaptobrevin family. As to quaternary structure, interacts with VAPA and VAPB. (Microbial infection) Targeted and hydrolyzed by C.botulinum neurotoxin type D (BoNT/D, botD) which hydrolyzes the 61-Lys-|-Leu-62 bond and inhibits neurotransmitter release. This is a poor substrate for BoNT/D, high concentrations are required to cleave it in vitro. Post-translationally, (Microbial infection) Targeted and hydrolyzed by C.botulinum neurotoxin type F (BoNT/F, botF) which hydrolyzes the 60-Gln-|-Lys-61 bond and inhibits neurotransmitter release. Expressed in brain and spleen (at protein level). Isoform 1 expressed at very high level in brain. Even higher level found in spinal cord. Isoform 3 expressed in kidney, spleen and liver. Isoforms 2 and 3 expressed in osteoblasts of trabecular bone. Also expressed in heart.

It localises to the cytoplasmic vesicle. Its subcellular location is the secretory vesicle. It is found in the synaptic vesicle membrane. The protein resides in the synapse. The protein localises to the synaptosome. It localises to the cytoplasmic vesicle membrane. Its subcellular location is the mitochondrion outer membrane. Involved in the targeting and/or fusion of transport vesicles to their target membrane. The protein is Vesicle-associated membrane protein 1 (Vamp1) of Rattus norvegicus (Rat).